Reading from the N-terminus, the 609-residue chain is UvrABC system protein C (609 aa).

Residues Ser-16 to Val-94 form the GIY-YIG domain. The 36-residue stretch at Gln-203–Val-238 folds into the UVR domain.

It belongs to the UvrC family. In terms of assembly, interacts with UvrB in an incision complex.

Its subcellular location is the cytoplasm. Its function is as follows. The UvrABC repair system catalyzes the recognition and processing of DNA lesions. UvrC both incises the 5' and 3' sides of the lesion. The N-terminal half is responsible for the 3' incision and the C-terminal half is responsible for the 5' incision. The sequence is that of UvrABC system protein C from Shewanella piezotolerans (strain WP3 / JCM 13877).